The following is an 83-amino-acid chain: Putative protein T-ENOL (83 aa).

Residues 1–33 form a disordered region; the sequence is MASTPMGNEGEKKSSWPSQAAPSLRGGPASLSR.

This Homo sapiens (Human) protein is Putative protein T-ENOL.